Here is a 146-residue protein sequence, read N- to C-terminus: uncharacterized protein (146 aa).

This is an uncharacterized protein from Bacillus subtilis (strain 168).